Here is a 177-residue protein sequence, read N- to C-terminus: Thymidine kinase (177 aa).

11–18 is an ATP binding site; the sequence is GPMFSGKS. Glu-83 serves as the catalytic Proton acceptor. Residue Phe-113 coordinates substrate. The Zn(2+) site is built by Cys-138 and Cys-141. Position 157–161 (157–161) interacts with substrate; the sequence is IEIIG. Residues Cys-170 and Cys-173 each contribute to the Zn(2+) site.

Belongs to the thymidine kinase family. As to quaternary structure, homotetramer. Two molecules of substrate bind to each enzyme tetramer.

It carries out the reaction thymidine + ATP = dTMP + ADP + H(+). Its function is as follows. Phosphorylates thymidine and thymidine analogs, such as azidothymidine (AZT). Part of the salvage pathway for pyrimidine deoxyribonucleotide synthesis. This Variola virus protein is Thymidine kinase (OPG101).